We begin with the raw amino-acid sequence, 352 residues long: GTPase Obg (352 aa).

Residues 1-159 form the Obg domain; that stretch reads MHFLDQAKIF…MYVWLRLKLL (159 aa). The interval 122–142 is disordered; it reads DGGRGNASYKTSTNRAPRQHG. Positions 160-328 constitute an OBG-type G domain; it reads ADAGLVGLPN…LLDAVLEYLP (169 aa). Residues 166–173, 191–195, 212–215, 280–283, and 309–311 contribute to the GTP site; these read GLPNAGKS, FTTLR, DIPG, NKID, and SGA. The Mg(2+) site is built by serine 173 and threonine 193.

This sequence belongs to the TRAFAC class OBG-HflX-like GTPase superfamily. OBG GTPase family. Monomer. Mg(2+) is required as a cofactor.

The protein localises to the cytoplasm. Functionally, an essential GTPase which binds GTP, GDP and possibly (p)ppGpp with moderate affinity, with high nucleotide exchange rates and a fairly low GTP hydrolysis rate. Plays a role in control of the cell cycle, stress response, ribosome biogenesis and in those bacteria that undergo differentiation, in morphogenesis control. The protein is GTPase Obg of Novosphingobium aromaticivorans (strain ATCC 700278 / DSM 12444 / CCUG 56034 / CIP 105152 / NBRC 16084 / F199).